A 999-amino-acid chain; its full sequence is Protein Smaug (999 aa).

Over residues 1-37 (MKYATGTDNAMTSGISGQTNNSNSVSNEMQPTTSTPT) the composition is skewed to polar residues. Disordered regions lie at residues 1 to 45 (MKYA…EATS), 50 to 69 (TATY…QSQP), and 321 to 370 (CSSV…GSSS). Residues 321-338 (CSSVASSSMCPASGSRSS) are compositionally biased toward low complexity. Residues S564 and S575 each carry the phosphoserine modification. Residues 583–763 (EFKPNYIKFH…KDLKFKLSKM (181 aa)) are interaction with cup. In terms of domain architecture, SAM spans 600 to 654 (GIGLWLKSLRLHKYIELFKNMTYEEMLLITEDFLQSVGVTKGASHKLALCIDKLK). Positions 773-892 (HVKPAGVGPN…HHHAQQMQQM (120 aa)) are disordered. 2 stretches are compositionally biased toward polar residues: residues 801-822 (KNGS…NFSL) and 854-864 (HQPQYKSSSYP). The residue at position 972 (S972) is a Phosphoserine.

Belongs to the SMAUG family. Interacts with oskar (osk). Binds to the 3'-UTR of nos. Interacts with cup, which in turn recruits eIF4-E, leading to an indirect interaction between smg and eIF4-E that prevents mRNA translation.

Its subcellular location is the cytoplasm. Its function is as follows. Translation regulator that binds to the 3'-UTR of specific mRNAs such as nanos (nos) and prevent their translation. Prevents translation of unlocalized nos in the bulk cytoplasm via the recruitment of cup. The sequence is that of Protein Smaug (smg) from Drosophila yakuba (Fruit fly).